A 182-amino-acid polypeptide reads, in one-letter code: ATP synthase subunit delta (182 aa).

This sequence belongs to the ATPase delta chain family. In terms of assembly, F-type ATPases have 2 components, F(1) - the catalytic core - and F(0) - the membrane proton channel. F(1) has five subunits: alpha(3), beta(3), gamma(1), delta(1), epsilon(1). CF(0) has four main subunits: a(1), b(1), b'(1) and c(10-14). The alpha and beta chains form an alternating ring which encloses part of the gamma chain. F(1) is attached to F(0) by a central stalk formed by the gamma and epsilon chains, while a peripheral stalk is formed by the delta, b and b' chains.

The protein resides in the cellular thylakoid membrane. Functionally, f(1)F(0) ATP synthase produces ATP from ADP in the presence of a proton or sodium gradient. F-type ATPases consist of two structural domains, F(1) containing the extramembraneous catalytic core and F(0) containing the membrane proton channel, linked together by a central stalk and a peripheral stalk. During catalysis, ATP synthesis in the catalytic domain of F(1) is coupled via a rotary mechanism of the central stalk subunits to proton translocation. This protein is part of the stalk that links CF(0) to CF(1). It either transmits conformational changes from CF(0) to CF(1) or is implicated in proton conduction. The polypeptide is ATP synthase subunit delta (Trichodesmium erythraeum (strain IMS101)).